Reading from the N-terminus, the 34-residue chain is Putative protein YmiB (34 aa).

Residues 7-24 traverse the membrane as a helical segment; the sequence is TAAKRIVFFIYLFVIQFW.

The protein resides in the membrane. In Escherichia coli (strain K12), this protein is Putative protein YmiB (ymiB).